The following is a 283-amino-acid chain: Energy-coupling factor transporter ATP-binding protein EcfA1 (283 aa).

The ABC transporter domain occupies 7–244 (VEFRHVSFTY…PELLQEIGLD (238 aa)). 41 to 48 (GHNGSGKS) provides a ligand contact to ATP.

Belongs to the ABC transporter superfamily. Energy-coupling factor EcfA family. As to quaternary structure, forms a stable energy-coupling factor (ECF) transporter complex composed of 2 membrane-embedded substrate-binding proteins (S component), 2 ATP-binding proteins (A component) and 2 transmembrane proteins (T component).

It is found in the cell membrane. Functionally, ATP-binding (A) component of a common energy-coupling factor (ECF) ABC-transporter complex. Unlike classic ABC transporters this ECF transporter provides the energy necessary to transport a number of different substrates. In Lactobacillus acidophilus (strain ATCC 700396 / NCK56 / N2 / NCFM), this protein is Energy-coupling factor transporter ATP-binding protein EcfA1.